Here is an 833-residue protein sequence, read N- to C-terminus: MSFYNHKEIEPKWQGYWAEHHTFKTGTDTSKPKFYALDMFPYPSGAGLHVGHPEGYTATDILSRYKRAQGYNVLHPMGWDAFGLPAEQYAMDTGNDPAEFTAENIANFKRQINALGFSYDWDREVNTTDPNYYKWTQWIFTKLYEKGLAYEAEVPVNWVEELGTAIANEEVLPDGTSERGGYPVVRKPMRQWMLKITAYAERLLNDLDELDWSESIKDMQRNWIGKSTGANVTFKVKGTDKEFTVFTTRPDTLFGATFTVLAPEHELVDAITSSEQAEAVADYKHQASLKSDLARTDLAKEKTGVWTGAYAINPVNGKEMPIWIADYVLASYGTGAVMAVPAHDQRDWEFAKQFDLPIVEVLEGGNVEEAAYTEDGLHVNSDFLDGLNKEDAIAKIVAWLEEKGCGQEKVTYRLRDWLFSRQRYWGEPIPIIHWEDGTSTAVPETELPLVLPVTKDIRPSGTGESPLANLTDWLEVTREDGVKGRRETNTMPQWAGSSWYYLRYIDPHNTEKLADEDLLKQWLPVDIYVGGAEHAVLHLLYARFWHKFLYDLGVVPTKEPFQKLFNQGMILGTSYRDHRGALVATDKVEKRDGSFFHVETGEELEQAPAKMSKSLKNVVNPDDVVEQYGADTLRVYEMFMGPLDASIAWSEEGLEGSRKFLDRVYRLITSKEILAENNGALDKVYNETVKAVTEQIESLKFNTAIAQLMVFVNAANKEDKLYVDYAKGFIQLIAPFAPHLAEELWQTVAETGESISYVAWPTWDESKLVEDEIEIVVQIKGKVRAKLMVAKDLSREELQEIALADEKVKAEIDGKEIVKVIAVPNKLVNIVVK.

A 'HIGH' region motif is present at residues 41–52; sequence PYPSGAGLHVGH. The short motif at 610 to 614 is the 'KMSKS' region element; sequence KMSKS. Position 613 (Lys613) interacts with ATP.

The protein belongs to the class-I aminoacyl-tRNA synthetase family.

It is found in the cytoplasm. The enzyme catalyses tRNA(Leu) + L-leucine + ATP = L-leucyl-tRNA(Leu) + AMP + diphosphate. The chain is Leucine--tRNA ligase from Streptococcus pneumoniae serotype 4 (strain ATCC BAA-334 / TIGR4).